The following is a 274-amino-acid chain: Large ribosomal subunit protein uL2 (274 aa).

Positions Val-223–Lys-274 are disordered.

Belongs to the universal ribosomal protein uL2 family. In terms of assembly, part of the 50S ribosomal subunit. Forms a bridge to the 30S subunit in the 70S ribosome.

Functionally, one of the primary rRNA binding proteins. Required for association of the 30S and 50S subunits to form the 70S ribosome, for tRNA binding and peptide bond formation. It has been suggested to have peptidyltransferase activity; this is somewhat controversial. Makes several contacts with the 16S rRNA in the 70S ribosome. This Shewanella baltica (strain OS223) protein is Large ribosomal subunit protein uL2.